Reading from the N-terminus, the 425-residue chain is Phosphomethylpyrimidine synthase (425 aa).

Substrate is bound by residues asparagine 66, methionine 95, tyrosine 124, histidine 159, 181–183 (SRG), 222–225 (DAYR), and glutamate 261. Histidine 265 provides a ligand contact to Zn(2+). Tyrosine 288 serves as a coordination point for substrate. Zn(2+) is bound at residue histidine 329. 3 residues coordinate [4Fe-4S] cluster: cysteine 406, cysteine 409, and cysteine 413.

This sequence belongs to the ThiC family. [4Fe-4S] cluster serves as cofactor.

The enzyme catalyses 5-amino-1-(5-phospho-beta-D-ribosyl)imidazole + S-adenosyl-L-methionine = 4-amino-2-methyl-5-(phosphooxymethyl)pyrimidine + CO + 5'-deoxyadenosine + formate + L-methionine + 3 H(+). Its pathway is cofactor biosynthesis; thiamine diphosphate biosynthesis. Catalyzes the synthesis of the hydroxymethylpyrimidine phosphate (HMP-P) moiety of thiamine from aminoimidazole ribotide (AIR) in a radical S-adenosyl-L-methionine (SAM)-dependent reaction. The sequence is that of Phosphomethylpyrimidine synthase from Archaeoglobus fulgidus (strain ATCC 49558 / DSM 4304 / JCM 9628 / NBRC 100126 / VC-16).